Consider the following 204-residue polypeptide: Quinol oxidase subunit 3 (204 aa).

Transmembrane regions (helical) follow at residues 27–47 (FWIF…TFFV), 66–86 (LVMI…IAVH), 95–115 (GVVI…GCEI), 118–138 (FVHY…SGFF), 140–160 (LLGT…GILI), and 184–204 (FLDV…LGGL).

It belongs to the cytochrome c oxidase subunit 3 family.

It localises to the cell membrane. The catalysed reaction is 2 a quinol + O2 = 2 a quinone + 2 H2O. In terms of biological role, catalyzes quinol oxidation with the concomitant reduction of oxygen to water. Major component for energy conversion during vegetative growth. The polypeptide is Quinol oxidase subunit 3 (qoxC) (Bacillus subtilis (strain 168)).